Consider the following 827-residue polypeptide: Disintegrin and metalloproteinase domain-containing protein 17 (827 aa).

The first 17 residues, 1–17, serve as a signal peptide directing secretion; sequence MRQRLLFLTTLVPFVLA. A propeptide spanning residues 18-214 is cleaved from the precursor; that stretch reads PRPPEEPGSG…SEEFVRRVKR (197 aa). The N-linked (GlcNAc...) asparagine glycan is linked to asparagine 157. A Cysteine switch motif is present at residues 182-189; it reads KVCGYLNA. A Zn(2+)-binding site is contributed by cysteine 184. Residues 215–671 lie on the Extracellular side of the membrane; the sequence is RAEPNPLKNT…NTFGKFLADN (457 aa). One can recognise a Peptidase M12B domain in the interval 223–474; the sequence is NTCKLLVVAD…KAQECFQERS (252 aa). 3 cysteine pairs are disulfide-bonded: cysteine 225–cysteine 333, cysteine 365–cysteine 469, and cysteine 423–cysteine 453. Asparagine 264 carries N-linked (GlcNAc...) asparagine glycosylation. Histidine 405 contacts Zn(2+). The active site involves glutamate 406. Residues histidine 409 and histidine 415 each coordinate Zn(2+). Asparagine 452, asparagine 498, asparagine 539, and asparagine 551 each carry an N-linked (GlcNAc...) asparagine glycan. The Disintegrin domain occupies 475–563; sequence NKVCGNSRVD…ECPPPGDAED (89 aa). Intrachain disulfides connect cysteine 534–cysteine 555, cysteine 573–cysteine 582, cysteine 578–cysteine 591, and cysteine 593–cysteine 600. A crambin-like region spans residues 603 to 671; it reads CCRNLSGPCV…NTFGKFLADN (69 aa). A glycan (N-linked (GlcNAc...) asparagine) is linked at asparagine 606. The helical transmembrane segment at 672 to 692 threads the bilayer; sequence IVGSVLVFSLIFWIPFSILVH. The Cytoplasmic portion of the chain corresponds to 693-827; the sequence is CVDKKLDKQY…SRVDSKETEC (135 aa). The short motif at 731-738 is the SH3-binding element; it reads PAPQTPGR. Position 735 is a phosphothreonine; by MAPK14 (threonine 735). The residue at position 764 (threonine 764) is a Phosphothreonine. The disordered stretch occupies residues 766–827; it reads QEDPSTDSHV…SRVDSKETEC (62 aa). Serine 770 bears the Phosphoserine mark. 3 stretches are compositionally biased toward basic and acidic residues: residues 771 to 784, 794 to 810, and 818 to 827; these read TDSH…EKDP, SFED…EKAA, and SRVDSKETEC. Serine 794 and serine 822 each carry phosphoserine.

As to quaternary structure, interacts with MAD2L1, MAPK14 and MUC1. Interacts with iRhom1/RHBDF1 and iRhom2/RHBDF2. Interacts with FRMD8 via its interaction with iRhom1/RHBDF1 and iRhom2/RHBDF2. Interacts with TSPAN8. It depends on Zn(2+) as a cofactor. Post-translationally, the precursor is cleaved by a furin endopeptidase. Phosphorylated. Stimulation by growth factor or phorbol 12-myristate 13-acetate induces phosphorylation of Ser-822 but decreases phosphorylation of Ser-794. Phosphorylation at Thr-735 by MAPK14 is required for ADAM17-mediated ectodomain shedding.

It localises to the membrane. The enzyme catalyses Narrow endopeptidase specificity. Cleaves Pro-Leu-Ala-Gln-Ala-|-Val-Arg-Ser-Ser-Ser in the membrane-bound, 26-kDa form of tumor necrosis factor alpha (TNFalpha). Similarly cleaves other membrane-anchored, cell-surface proteins to 'shed' the extracellular domains.. Transmembrane metalloprotease which mediates the ectodomain shedding of a myriad of transmembrane proteins including adhesion proteins, growth factor precursors and cytokines important for inflammation and immunity. Cleaves the membrane-bound precursor of TNF-alpha to its mature soluble form. Responsible for the proteolytical release of soluble JAM3 from endothelial cells surface. Responsible for the proteolytic release of several other cell-surface proteins, including p75 TNF-receptor, interleukin 1 receptor type II, p55 TNF-receptor, transforming growth factor-alpha, L-selectin, growth hormone receptor, MUC1 and the amyloid precursor protein. Acts as an activator of Notch pathway by mediating cleavage of Notch, generating the membrane-associated intermediate fragment called Notch extracellular truncation (NEXT). Plays a role in the proteolytic processing of ACE2. Plays a role in hemostasis through shedding of GP1BA, the platelet glycoprotein Ib alpha chain. Mediates the proteolytic cleavage of LAG3, leading to release the secreted form of LAG3. Mediates the proteolytic cleavage of IL6R, leading to the release of secreted form of IL6R. Mediates the proteolytic cleavage and shedding of FCGR3A upon NK cell stimulation, a mechanism that allows for increased NK cell motility and detachment from opsonized target cells. Cleaves TREM2, resulting in shedding of the TREM2 ectodomain. The polypeptide is Disintegrin and metalloproteinase domain-containing protein 17 (Adam17) (Rattus norvegicus (Rat)).